Here is a 688-residue protein sequence, read N- to C-terminus: Translation initiation factor IF-2 (688 aa).

Residues lysine 54 to asparagine 95 are disordered. Residues lysine 86–asparagine 95 are compositionally biased toward basic and acidic residues. The 168-residue stretch at lysine 187–glutamate 354 folds into the tr-type G domain. Residues glycine 196–threonine 203 form a G1 region. A GTP-binding site is contributed by glycine 196–threonine 203. Residues glycine 221–histidine 225 form a G2 region. Residues aspartate 242–glycine 245 are G3. GTP contacts are provided by residues aspartate 242–histidine 246 and asparagine 296–aspartate 299. The interval asparagine 296–aspartate 299 is G4. A G5 region spans residues serine 332–histidine 334.

The protein belongs to the TRAFAC class translation factor GTPase superfamily. Classic translation factor GTPase family. IF-2 subfamily.

The protein localises to the cytoplasm. In terms of biological role, one of the essential components for the initiation of protein synthesis. Protects formylmethionyl-tRNA from spontaneous hydrolysis and promotes its binding to the 30S ribosomal subunits. Also involved in the hydrolysis of GTP during the formation of the 70S ribosomal complex. This Clostridium botulinum (strain Okra / Type B1) protein is Translation initiation factor IF-2.